The primary structure comprises 86 residues: Probable weak neurotoxin NNAM1 (86 aa).

An N-terminal signal peptide occupies residues 1 to 21 (MKTLLLSLVVVTIVCLDLGYT). 5 disulfides stabilise this stretch: C24/C45, C27/C32, C38/C63, C67/C78, and C79/C84.

The protein belongs to the three-finger toxin family. Ancestral subfamily. Orphan group II sub-subfamily. Expressed by the venom gland.

Its subcellular location is the secreted. Binds with low affinity to muscular (alpha-1-beta-1-delta-epsilon/CHRNA1-CHRNB1-CHRND-CHRNE) and very low affinity to neuronal (alpha-7/CHRNA7) nicotinic acetylcholine receptor (nAChR). The polypeptide is Probable weak neurotoxin NNAM1 (Naja atra (Chinese cobra)).